We begin with the raw amino-acid sequence, 133 residues long: Small ribosomal subunit protein uS8 (133 aa).

This sequence belongs to the universal ribosomal protein uS8 family. As to quaternary structure, part of the 30S ribosomal subunit.

Functionally, one of the primary rRNA binding proteins, it binds directly to 16S rRNA central domain where it helps coordinate assembly of the platform of the 30S subunit. The polypeptide is Small ribosomal subunit protein uS8 (Sulfolobus acidocaldarius (strain ATCC 33909 / DSM 639 / JCM 8929 / NBRC 15157 / NCIMB 11770)).